Reading from the N-terminus, the 336-residue chain is tRNA pseudouridine synthase D (336 aa).

The Nucleophile role is filled by aspartate 84. One can recognise a TRUD domain in the interval 164 to 298 (GVPNYFGEQR…TPSYRWLVGD (135 aa)).

The protein belongs to the pseudouridine synthase TruD family.

It catalyses the reaction uridine(13) in tRNA = pseudouridine(13) in tRNA. Responsible for synthesis of pseudouridine from uracil-13 in transfer RNAs. The polypeptide is tRNA pseudouridine synthase D (Cellvibrio japonicus (strain Ueda107) (Pseudomonas fluorescens subsp. cellulosa)).